Consider the following 37-residue polypeptide: Photosystem I reaction center subunit VIII (37 aa).

A helical transmembrane segment spans residues 10-30 (IFVPLVGLVFPAIAMASLSLY).

It belongs to the PsaI family.

It localises to the plastid. It is found in the chloroplast thylakoid membrane. In terms of biological role, may help in the organization of the PsaL subunit. This is Photosystem I reaction center subunit VIII from Gossypium hirsutum (Upland cotton).